The sequence spans 417 residues: Pre-mRNA-splicing factor RBM22 (417 aa).

Residues 159–186 form a C3H1-type zinc finger; sequence RNRPHICSFWVKGECKRGEECPYRHEKP. The region spanning 232–305 is the RRM domain; it reads TTLYVGGLGD…RRLNVKWGRS (74 aa). 2 disordered regions span residues 303–348 and 369–417; these read GRSQ…SANY and GLSG…PSSG. Basic and acidic residues predominate over residues 309–318; sequence RGKEREHDGS. Positions 369–391 are enriched in pro residues; sequence GLSGPPPGFGPHMFPPMAPPPFL.

This sequence belongs to the SLT11 family. As to quaternary structure, component of the pre-catalytic and catalytic spliceosome complexes. Component of the postcatalytic spliceosome P complex.

The protein resides in the nucleus. It is found in the cytoplasm. In terms of biological role, required for pre-mRNA splicing as component of the activated spliceosome. Involved in the first step of pre-mRNA splicing. Binds directly to the internal stem-loop (ISL) domain of the U6 snRNA and to the pre-mRNA intron near the 5' splice site during the activation and catalytic phases of the spliceosome cycle. This is Pre-mRNA-splicing factor RBM22 (rbm22) from Xenopus laevis (African clawed frog).